Here is a 244-residue protein sequence, read N- to C-terminus: High affinity immunoglobulin epsilon receptor subunit beta (244 aa).

Topologically, residues 1–59 (MDTESNRRANLALPQEPSSVPAFEVLEISPQEVSSGRLLKSASSPPLHTWLTVLKKEQE) are cytoplasmic. Residues 60-79 (FLGVTQILTAMICLCFGTVV) traverse the membrane as a helical segment. Over 80–97 (CSVLDISHIEGDIFSSFK) the chain is Extracellular. Residues 98–117 (AGYPFWGAIFFSISGMLSII) traverse the membrane as a helical segment. Residues 118–130 (SERRNATYLVRGS) lie on the Cytoplasmic side of the membrane. The chain crosses the membrane as a helical span at residues 131–150 (LGANTASSIAGGTGITILII). Topologically, residues 151–180 (NLKKSLAYIHIHSCQKFFETKCFMASFSTE) are extracellular. A helical transmembrane segment spans residues 181–200 (IVVMMLFLTILGLGSAVSLT). The Cytoplasmic portion of the chain corresponds to 201 to 244 (ICGAGEELKGNKVPEDRVYEELNIYSATYSELEDPGEMSPPIDL). Tyr219 and Tyr225 each carry phosphotyrosine. A Phosphoserine modification is found at Ser226. Tyr229 carries the phosphotyrosine modification.

This sequence belongs to the MS4A family. As to quaternary structure, tetramer of an alpha chain, a beta chain, and two disulfide linked gamma chains. Binds LILRB1. Interacts with FGR, FES/FPS and LYN. Post-translationally, phosphorylated on tyrosine residues by LYN. In terms of tissue distribution, found on the surface of mast cells and basophils.

The protein localises to the membrane. In terms of biological role, high affinity receptor that binds to the Fc region of immunoglobulins epsilon. Aggregation of FCER1 by multivalent antigens is required for the full mast cell response, including the release of preformed mediators (such as histamine) by degranulation and de novo production of lipid mediators and cytokines. Also mediates the secretion of important lymphokines. Binding of allergen to receptor-bound IgE leads to cell activation and the release of mediators responsible for the manifestations of allergy. This is High affinity immunoglobulin epsilon receptor subunit beta (MS4A2) from Homo sapiens (Human).